Consider the following 904-residue polypeptide: uncharacterized protein (904 aa).

2 disordered regions span residues Lys247–Phe275 and Gly328–Ser360. The segment covering Gly342–Ser360 has biased composition (polar residues). The helical transmembrane segment at Val778 to Leu798 threads the bilayer.

It is found in the membrane. This is an uncharacterized protein from Homo sapiens (Human).